A 317-amino-acid polypeptide reads, in one-letter code: MSQLLVAKVLCMVGVFFFMLLGSLLPVKVIEADFEKAHRSKKVLSLCNTFGGGVFLATCFNALLPAVRDKLQQVLSLGHISTDYPLAETLMMVGFFLTVFVEQLVLTFRRERPPFIDLETFNAGSDAGSDSEYESPFVGVGGRNHGLYPEPTAHSHGTGLRLRELGRPGPLRLLSLVFALSAHSVFEGLALGLQEEGERVVSLFVGVAVHETLVAVALGISMARSAVPLRDAAKLAVTVSAMIPVGIGLGLGIESARSVASSVASALLQGLAGGTFLFVTFLEILAKELEERSEQLLKVLFLVLGYAVLAGMVFLKW.

Residues 1–3 lie on the Extracellular side of the membrane; it reads MSQ. The chain crosses the membrane as a helical span at residues 4 to 24; sequence LLVAKVLCMVGVFFFMLLGSL. At 25 to 42 the chain is on the cytoplasmic side; that stretch reads LPVKVIEADFEKAHRSKK. The chain crosses the membrane as a helical span at residues 43–63; it reads VLSLCNTFGGGVFLATCFNAL. The Extracellular segment spans residues 64-85; sequence LPAVRDKLQQVLSLGHISTDYP. The helical transmembrane segment at 86 to 106 threads the bilayer; that stretch reads LAETLMMVGFFLTVFVEQLVL. The Cytoplasmic portion of the chain corresponds to 107-172; sequence TFRRERPPFI…RELGRPGPLR (66 aa). 2 positions are modified to phosphoserine: Ser-125 and Ser-129. The chain crosses the membrane as a helical span at residues 173-193; sequence LLSLVFALSAHSVFEGLALGL. The Extracellular segment spans residues 194–199; it reads QEEGER. A helical membrane pass occupies residues 200-220; the sequence is VVSLFVGVAVHETLVAVALGI. The Cytoplasmic portion of the chain corresponds to 221–232; that stretch reads SMARSAVPLRDA. Residues 233 to 253 form a helical membrane-spanning segment; the sequence is AKLAVTVSAMIPVGIGLGLGI. Over 254 to 265 the chain is Extracellular; it reads ESARSVASSVAS. The chain crosses the membrane as a helical span at residues 266–286; the sequence is ALLQGLAGGTFLFVTFLEILA. The Cytoplasmic segment spans residues 287–294; sequence KELEERSE. The helical transmembrane segment at 295–315 threads the bilayer; it reads QLLKVLFLVLGYAVLAGMVFL. Residues 316 to 317 are Extracellular-facing; that stretch reads KW.

It belongs to the ZIP transporter (TC 2.A.5) family.

Its subcellular location is the cell membrane. The protein localises to the apical cell membrane. It catalyses the reaction Zn(2+)(in) = Zn(2+)(out). Functionally, transporter for the divalent cation Zn(2+). Mediates the influx of Zn(2+) into cells from extracellular space. Controls Zn(2+) accumulation into dentate gyrus granule cells in the hippocampus. Mediates Zn(2+) reuptake from the secreted milk within the alveolar lumen. This chain is Zinc transporter ZIP3 (Slc39a3), found in Rattus norvegicus (Rat).